We begin with the raw amino-acid sequence, 334 residues long: Putative carboxypeptidase VC_A0337 (334 aa).

Ser-112 serves as the catalytic Nucleophile. Active-site charge relay system residues include Glu-234 and His-302.

This sequence belongs to the peptidase S66 family.

The chain is Putative carboxypeptidase VC_A0337 from Vibrio cholerae serotype O1 (strain ATCC 39315 / El Tor Inaba N16961).